We begin with the raw amino-acid sequence, 100 residues long: Urease subunit gamma (100 aa).

This sequence belongs to the urease gamma subunit family. As to quaternary structure, heterotrimer of UreA (gamma), UreB (beta) and UreC (alpha) subunits. Three heterotrimers associate to form the active enzyme.

It is found in the cytoplasm. The enzyme catalyses urea + 2 H2O + H(+) = hydrogencarbonate + 2 NH4(+). Its pathway is nitrogen metabolism; urea degradation; CO(2) and NH(3) from urea (urease route): step 1/1. This Burkholderia thailandensis (strain ATCC 700388 / DSM 13276 / CCUG 48851 / CIP 106301 / E264) protein is Urease subunit gamma.